The following is a 119-amino-acid chain: MITKPDKNVIRKKRHNRVRRTLSGTAERPRLNVYRSNKNIYAQLIDDNAGVTVASASTADKELAIGGGNVESAKQVGAAIAKRAIDKGYKSIVFDRGGYLYHGRIKALAEAAREEGLEF.

This sequence belongs to the universal ribosomal protein uL18 family. Part of the 50S ribosomal subunit; part of the 5S rRNA/L5/L18/L25 subcomplex. Contacts the 5S and 23S rRNAs.

Functionally, this is one of the proteins that bind and probably mediate the attachment of the 5S RNA into the large ribosomal subunit, where it forms part of the central protuberance. The sequence is that of Large ribosomal subunit protein uL18 from Oceanobacillus iheyensis (strain DSM 14371 / CIP 107618 / JCM 11309 / KCTC 3954 / HTE831).